Reading from the N-terminus, the 243-residue chain is Uridine-cytidine kinase B (243 aa).

Residue 22 to 29 participates in ATP binding; sequence GGTASGKT.

The protein belongs to the uridine kinase family.

The catalysed reaction is uridine + ATP = UMP + ADP + H(+). The enzyme catalyses cytidine + ATP = CMP + ADP + H(+). Its pathway is pyrimidine metabolism; CTP biosynthesis via salvage pathway; CTP from cytidine: step 1/3. It functions in the pathway pyrimidine metabolism; UMP biosynthesis via salvage pathway; UMP from uridine: step 1/1. Its function is as follows. Catalyzes the conversion of uridine into uridine monophosphate and cytidine into cytidine monophosphate in the pyrimidine salvage pathway. This Dictyostelium discoideum (Social amoeba) protein is Uridine-cytidine kinase B (udkB).